We begin with the raw amino-acid sequence, 332 residues long: MEITVYIPGIEENQRPHFDEIFSTFAKRGNVREAVSSLHKLFKKQKNTGLLASLVILKQFVDTSRKSQERFNLLEILQQTKFLAQSIYKHIKSQEHSCDMEDMFSDCKDRMSLILSESCGCLNCITTTKQLMNSLCDARPPKLSSHKKVCQAHNFLTTVHNQVVVADRVSVSVLSLSDLVLDMGDFPELPKDIQLETRGVASCVYLCWFYYMLLKHVQNDFEILEASINNWLLTNGYSQGFTSYDNLLPIVTTKRGSGELTYNLDSFQVLQNTLQTVRNFLTTQPPRREQKHLLTLLKEKGYYVEPKESMCKTPQCPEEEGGLPFLKKLGTG.

It belongs to the herpesviridae BBRF2 family.

This is an uncharacterized protein from Bos taurus (Bovine).